Reading from the N-terminus, the 184-residue chain is MKKQILALVCGVIFSSSTWAHNLQLEQSLPSVKVSEYGEIVLSGKDTVFQPWGSAELAGKVRVVHHLAGRTAAKEXNQSMIDVIKASHFNPVKYQTTTIINADDAIVGTGMFVKNGAKKGKQENPHSQVVLDDKSAVKNAWGLNSKDSAIIVLDKTGKVKFVKEGKLSDSDIQTVISLVNGLTK.

Positions 1 to 20 are cleaved as a signal peptide; it reads MKKQILALVCGVIFSSSTWA.

This sequence to E.coli YtfJ.

The protein localises to the periplasm. This is an uncharacterized protein from Haemophilus influenzae (strain ATCC 51907 / DSM 11121 / KW20 / Rd).